The following is a 157-amino-acid chain: SsrA-binding protein (157 aa).

The disordered stretch occupies residues 132–157 (VHDKRQAQKDKDWAREKDRLFKKAYK). Basic and acidic residues predominate over residues 135-157 (KRQAQKDKDWAREKDRLFKKAYK).

It belongs to the SmpB family.

The protein resides in the cytoplasm. Its function is as follows. Required for rescue of stalled ribosomes mediated by trans-translation. Binds to transfer-messenger RNA (tmRNA), required for stable association of tmRNA with ribosomes. tmRNA and SmpB together mimic tRNA shape, replacing the anticodon stem-loop with SmpB. tmRNA is encoded by the ssrA gene; the 2 termini fold to resemble tRNA(Ala) and it encodes a 'tag peptide', a short internal open reading frame. During trans-translation Ala-aminoacylated tmRNA acts like a tRNA, entering the A-site of stalled ribosomes, displacing the stalled mRNA. The ribosome then switches to translate the ORF on the tmRNA; the nascent peptide is terminated with the 'tag peptide' encoded by the tmRNA and targeted for degradation. The ribosome is freed to recommence translation, which seems to be the essential function of trans-translation. In Francisella tularensis subsp. novicida (strain U112), this protein is SsrA-binding protein.